A 113-amino-acid polypeptide reads, in one-letter code: Hydrogenase maturation factor HypA (113 aa).

His2 serves as a coordination point for Ni(2+). Cys73, Cys76, Cys89, and Cys92 together coordinate Zn(2+).

This sequence belongs to the HypA/HybF family.

Involved in the maturation of [NiFe] hydrogenases. Required for nickel insertion into the metal center of the hydrogenase. In Aeromonas salmonicida (strain A449), this protein is Hydrogenase maturation factor HypA.